A 456-amino-acid chain; its full sequence is 1,3-beta-glucanosyltransferase gas4 (456 aa).

The signal sequence occupies residues 1–25; the sequence is MGVANIIYALFLLGPSIFLKATAQT. Cys68 and Cys97 form a disulfide bridge. Tyr86, Asn156, Glu157, Asp197, and Arg202 together coordinate (1,3-beta-D-glucosyl)n. The active-site Proton donor is the Glu157. Intrachain disulfides connect Cys211-Cys350 and Cys229-Cys260. An N-linked (GlcNAc...) asparagine glycan is attached at Asn248. The active-site Nucleophile is Glu257. Tyr296 contributes to the (1,3-beta-D-glucosyl)n binding site. Disordered regions lie at residues 334 to 353 and 384 to 434; these read NPKGDGGYKKAGSPSKCPAN and IEGP…ESGS. N-linked (GlcNAc...) asparagine glycans are attached at residues Asn353 and Asn415. A compositionally biased stretch (low complexity) spans 417-434; sequence TSTTSYTSGMTSSSESGS. A lipid anchor (GPI-anchor amidated serine) is attached at Ser432. A propeptide spans 433-456 (removed in mature form); that stretch reads GSSKIGVAFCQALFITVLIATLSF.

This sequence belongs to the glycosyl hydrolase 72 family.

The protein localises to the cell membrane. Splits internally a 1,3-beta-glucan molecule and transfers the newly generated reducing end (the donor) to the non-reducing end of another 1,3-beta-glucan molecule (the acceptor) forming a 1,3-beta linkage, resulting in the elongation of 1,3-beta-glucan chains in the cell wall. Involved in spore wall assembly. The polypeptide is 1,3-beta-glucanosyltransferase gas4 (gas4) (Schizosaccharomyces pombe (strain 972 / ATCC 24843) (Fission yeast)).